Consider the following 214-residue polypeptide: S-crystallin 1 (214 aa).

One can recognise a GST N-terminal domain in the interval 2–79 (PSYTLHYFNH…YLAREFGFHG (78 aa)). Residues 81-214 (NNMEMARVDF…YLQRRCRTDF (134 aa)) form the GST C-terminal domain.

This sequence belongs to the GST superfamily. As to expression, lens.

In terms of biological role, S-crystallins are structural components of squids and octopi eye lens. Contains relatively little GST activity (1/1000 of that of mammalian GST enzyme). This is S-crystallin 1 (OCTS1) from Octopus vulgaris (Common octopus).